Here is a 137-residue protein sequence, read N- to C-terminus: Small ribosomal subunit protein uS9 (137 aa).

Over residues Leu105 to Ala117 the composition is skewed to basic and acidic residues. Positions Leu105 to Arg137 are disordered. The span at Lys118 to Arg137 shows a compositional bias: basic residues.

Belongs to the universal ribosomal protein uS9 family.

This is Small ribosomal subunit protein uS9 from Prochlorococcus marinus (strain MIT 9211).